The chain runs to 154 residues: MKKEQLVADLEALCAPIVKEKGYDLYHIEYVKENNEYYLRLYIEKPEERISLRDCEIVSRALSDMLDIEDPIKDAYFLEVSSPGLNRRLHSDEHFNRFIGKEIFVGFKSSLSGRKNVKGILKDVQENEIIVECEGNEIKVPKDKIKTANLEGEI.

This sequence belongs to the RimP family.

Its subcellular location is the cytoplasm. In terms of biological role, required for maturation of 30S ribosomal subunits. This is Ribosome maturation factor RimP from Clostridium perfringens (strain SM101 / Type A).